Here is a 128-residue protein sequence, read N- to C-terminus: Transcription antitermination protein NusB (128 aa).

This sequence belongs to the NusB family.

Functionally, involved in transcription antitermination. Required for transcription of ribosomal RNA (rRNA) genes. Binds specifically to the boxA antiterminator sequence of the ribosomal RNA (rrn) operons. This chain is Transcription antitermination protein NusB, found in Listeria monocytogenes serotype 4b (strain CLIP80459).